The chain runs to 429 residues: Gamma-glutamyl phosphate reductase (429 aa).

This sequence belongs to the gamma-glutamyl phosphate reductase family.

The protein localises to the cytoplasm. The catalysed reaction is L-glutamate 5-semialdehyde + phosphate + NADP(+) = L-glutamyl 5-phosphate + NADPH + H(+). Its pathway is amino-acid biosynthesis; L-proline biosynthesis; L-glutamate 5-semialdehyde from L-glutamate: step 2/2. Its function is as follows. Catalyzes the NADPH-dependent reduction of L-glutamate 5-phosphate into L-glutamate 5-semialdehyde and phosphate. The product spontaneously undergoes cyclization to form 1-pyrroline-5-carboxylate. The polypeptide is Gamma-glutamyl phosphate reductase (Nocardioides sp. (strain ATCC BAA-499 / JS614)).